The sequence spans 71 residues: Conotoxin De13.1 (71 aa).

The N-terminal stretch at 1–19 (MSGMGVLLLVLLLVMPLAA) is a signal peptide. The propeptide occupies 20 to 35 (FHQDGEGEATRRSGGL). 2 positions are modified to 4-hydroxyproline: P40 and P44. W51 is subject to 6'-bromotryptophan. E52 carries the post-translational modification 4-carboxyglutamate. K55 carries the post-translational modification 5-hydroxylysine. P58 is subject to 4-hydroxyproline. H69 is modified (histidine amide).

The protein belongs to the conotoxin G superfamily. Post-translationally, contains 4 disulfide bonds. Expressed by the venom duct.

It localises to the secreted. The polypeptide is Conotoxin De13.1 (Conasprella delessertii (Sozon's cone)).